The sequence spans 212 residues: MRTGEVAEAVPRVVAILSSLLQRVAERNDAAAAAAAVGEEAAAVSAFQGLTKPAISIGGYLERIFRFANCSPSCYVVAYIYLDRFLRRRPALAVDSFNVHRLLITSVLTAVKFVDDICYNNAYFARVGGISLMEMNYLEVDFLFGIAFDLNVTPAAFASYCAVLQSEMTYLEQPPAVDLPRLHCCPSDQDDAGCHHKQQQQQQQQQQHQLAV.

The protein belongs to the cyclin family. Cyclin U/P subfamily.

This Oryza sativa subsp. japonica (Rice) protein is Cyclin-P4-1 (CYCP4-1).